The primary structure comprises 288 residues: ATP synthase gamma chain (288 aa).

The protein belongs to the ATPase gamma chain family. F-type ATPases have 2 components, CF(1) - the catalytic core - and CF(0) - the membrane proton channel. CF(1) has five subunits: alpha(3), beta(3), gamma(1), delta(1), epsilon(1). CF(0) has three main subunits: a, b and c.

It is found in the cell inner membrane. In terms of biological role, produces ATP from ADP in the presence of a proton gradient across the membrane. The gamma chain is believed to be important in regulating ATPase activity and the flow of protons through the CF(0) complex. This Vibrio cholerae serotype O1 (strain ATCC 39541 / Classical Ogawa 395 / O395) protein is ATP synthase gamma chain.